The primary structure comprises 423 residues: Glutamyl-tRNA(Gln) amidotransferase subunit A (423 aa).

Residues lysine 28 and serine 103 each act as charge relay system in the active site. Serine 127 (acyl-ester intermediate) is an active-site residue.

Belongs to the amidase family. GatA subfamily. Heterotrimer of A, B and C subunits.

The enzyme catalyses L-glutamyl-tRNA(Gln) + L-glutamine + ATP + H2O = L-glutaminyl-tRNA(Gln) + L-glutamate + ADP + phosphate + H(+). Functionally, allows the formation of correctly charged Gln-tRNA(Gln) through the transamidation of misacylated Glu-tRNA(Gln) in organisms which lack glutaminyl-tRNA synthetase. The reaction takes place in the presence of glutamine and ATP through an activated gamma-phospho-Glu-tRNA(Gln). This chain is Glutamyl-tRNA(Gln) amidotransferase subunit A, found in Halobacterium salinarum (strain ATCC 700922 / JCM 11081 / NRC-1) (Halobacterium halobium).